Consider the following 1473-residue polypeptide: NACHT, LRR and PYD domains-containing protein 1 (1473 aa).

In terms of domain architecture, Pyrin spans Met-1–His-92. Residues Ala-90 to Ser-113 form a disordered region. Phosphoserine; by MAPK11 and MAPK14 is present on residues Ser-93, Ser-99, and Ser-101. The residue at position 107 (Ser-107) is a Phosphoserine; by MAPK14. The ZAKalpha motif 1 signature appears at Pro-111 to Leu-117. Thr-112 carries the phosphothreonine; by MAPK11, MAPK14 and MAP3K20 modification. Ser-113 carries the post-translational modification Phosphoserine; by MAP3K20. Phosphothreonine; by MAP3K20 is present on residues Thr-114 and Thr-129. A Phosphoserine; by MAP3K20 modification is found at Ser-132. Positions Leu-160–Pro-254 are disordered. Ser-163 is modified (phosphoserine; by MAPK14). At Ser-168 the chain carries Phosphoserine; by MAPK11 and MAPk14. Position 170 is a phosphoserine; by MAPK11 and MAPK14 (Ser-170). The span at Ser-170–Val-182 shows a compositional bias: polar residues. Ser-173 carries the phosphoserine; by MAPK11 modification. The ZAKalpha motif 2 signature appears at Pro-177–Leu-183. Thr-178 carries the post-translational modification Phosphothreonine; by MAPK11. Ser-179 is subject to Phosphoserine; by MAPK11 and MAP3K20. A Phosphothreonine; by MAPK11 and MAP3K20 modification is found at Thr-180. Basic and acidic residues predominate over residues Glu-218 to Arg-231. An NACHT domain is found at Arg-328 to Leu-637. Position 334-341 (Gly-334–Ser-341) interacts with ATP. 6 LRR repeats span residues Asn-809–Lys-830, Leu-838–Ala-858, Thr-866–Gln-887, Lys-895–Ala-915, Ser-923–Glu-944, and Ala-950–Ala-973. A disordered region spans residues Val-991–Ser-1017. The interval Phe-1079–Phe-1212 is ZU5. In terms of domain architecture, FIIND spans Phe-1079–Pro-1364. Residues Ser-1213–Pro-1364 form a UPA region. The CARD domain occupies Asp-1374 to Gly-1463.

It belongs to the NLRP family. In terms of assembly, interacts (via LRR repeats) with BCL2 and BCL2L1 (via the loop between motifs BH4 and BH3); these interactions reduce NLRP1 inflammasome-induced CASP1 activation and IL1B release, possibly by impairing NLRP1 interaction with PYCARD. Interacts with NOD2; this interaction is enhanced in the presence of muramyl dipeptide (MDP) and increases IL1B release. Interacts with EIF2AK2/PKR; this interaction requires EIF2AK2 activity, is accompanied by EIF2AK2 autophosphorylation and promotes inflammasome assembly in response to danger-associated signals. Interacts with MEFV; this interaction targets NLRP1 to degradation by autophagy, hence preventing excessive IL1B- and IL18-mediated inflammation. Binds (via LRR domain) to dsDNA and dsRNA. Interacts with DPP9; leading to inhibit activation of the inflammasome. DPP9 acts via formation of a ternary complex, composed of a DPP9 homodimer, one full-length NLRP1 protein, and one cleaved C-terminus of NLRP1 (NACHT, LRR and PYD domains-containing protein 1, C-terminus). Interacts with DPP8; leading to inhibit activation of the inflammasome, probably via formation of a ternary complex with DPP8. As to quaternary structure, interacts with the C-terminal part of NLRP1 (NACHT, LRR and PYD domains-containing protein 1, C-terminus) in absence of pathogens and other damage-associated signals. Interacts with the N-terminal part of NLRP1 (NACHT, LRR and PYD domains-containing protein 1, N-terminus) in absence of pathogens and other damage-associated signals. Homomultimer; forms the NLRP1 inflammasome polymeric complex, a filament composed of homopolymers of this form in response to pathogens and other damage-associated signals. The NLRP1 inflammasome polymeric complex associates with PYCARD/ASC. Interacts (via CARD domain) with PYCARD/ASC (via CARD domain); leading to pro-caspase-1 (proCASP1) recruitment. Pro-caspase-1 (proCASP1) filament formation increases local enzyme concentration, resulting in trans-autocleavage and activation. Active CASP1 then processes IL1B and IL18 precursors, leading to the release of mature cytokines in the extracellular milieu and inflammatory response. In terms of assembly, (Microbial infection) Interacts with vaccinia virus protein F1. As to quaternary structure, (Microbial infection) Interacts with human herpes virus 8/HHV-8 proteins ORF45; relieving autoinhibition of the NLRP1 inflammasome. Autocatalytically cleaved. Autocatalytic cleavage in FIIND region occurs constitutively, prior to activation signals, and is required for inflammasome activity (IL1B release), possibly by facilitating CASP1 binding. Both N- and C-terminal parts remain associated non-covalently. In terms of processing, ubiquitinated by the cullin:ZER1/ZYG11B complex in response to pathogen-associated signals, leading to its degradation by the proteasome and subsequent release of the cleaved C-terminal part of the protein (NACHT, LRR and PYD domains-containing protein 1, C-terminus), which polymerizes and forms the NLRP1 inflammasome. Post-translationally, phosphorylated by MAP3K20 isoform ZAKalpha, MAPK11 and MAPK14 in response to UV-B irradiation and ribosome collisions, promoting activation of the NLRP1 inflammasome and pyroptosis. (Microbial infection) Cleaved between Gln-130 and Gly-131 by the Protease 3C from various human enteroviruses and rhinoviruses (EV68, EV71, Coxsackievirus B3, HRV-14 and HRV-16). This cleavage triggers N-glycine-mediated proteasomal degradation of the autoinhibitory NLRP1 N-terminal fragment via the cullin:ZER1/ZYG11B complex which liberates the activating C-terminal fragment and activates NLRP1 inflammasome. In terms of processing, (Microbial infection) Cleaved between Gln-333 and Gly-334 by the 3C-like proteinase nsp5 from human coronavirus SARS-CoV-2. This cleavage liberates the activating C-terminal fragment and activates NLRP1 inflammasome, leading to downstream activation of GSDME and lung epithelial cell death. In terms of tissue distribution, widely expressed. Abundantly expressed in primary immune cells (isoform 1 and isoform 2), including in neutrophils, monocytes/macrophages, dendritic cells (mostly Langerhans cells), and B- and T-lymphocytes (at protein level). Strongly expressed in epithelial cells lining the glandular epithelium, such as that of the gastrointestinal tract (stomach, small intestine, colon), the respiratory tract (trachea and bronchi), and the endometrial and endocervical glands, gallbladder, prostate, and breast (at protein level). In testis, expressed in spermatogonia and primary spermatocytes, but not in Sertoli cells (at protein level). In the brain, expressed in neurons, in particular in pyramidal ones and in oligodendrocytes, but not detected in microglia (at protein level). Expressed in adult and fetal ocular tissues, including in adult and 24-week old fetal choroid, sclera, cornea, and optic nerve, as well as in adult retina and fetal retina/retinal pigment epithelium. Highly expressed in the skin throughout the epidermis and in dermal fibroblasts, in both glabrous skin and plantar skin. It is detected in keratinocytes, but not in melanocytes. Expressed in epidermal appendages such as hair follicles.

The protein localises to the cytoplasm. It localises to the cytosol. The protein resides in the nucleus. Its subcellular location is the inflammasome. It carries out the reaction ATP + H2O = ADP + phosphate + H(+). Its activity is regulated as follows. NLRP1 inflammasome is activated by cleavage by the Protease 3C from various human enteroviruses and rhinoviruses (EV68, EV71, Coxsackievirus B3, HRV-14 and HRV-16): cleavage promotes ubiquitination and degradation of the N-terminal part, releasing the cleaved C-terminal part of the protein (NACHT, LRR and PYD domains-containing protein 1, C-terminus), which polymerizes and forms the NLRP1 inflammasome. Activated double-stranded RNA: positive-strand RNA viruses such as Semliki forest virus and long dsRNA activate the NLRP1 inflammasome. In contrast to its mouse ortholog, not activated by Bacillus anthracis lethal toxin. NLRP1 inflammasome is inhibited by DPP8 and DPP9, which sequester the C-terminal fragment of NLRP1 (NACHT, LRR and PYD domains-containing protein 1, C-terminus) in a ternary complex, thereby preventing NLRP1 oligomerization and activation. NLRP1 inflammasome is activated by Val-boroPro (Talabostat, PT-100), an inhibitor of dipeptidyl peptidases DPP8 and DPP9. Val-boroPro relieves inhibition of DPP8 and/or DPP9 by promoting disruption of the ternary complex, releasing its C-terminal part from autoinhibition. ATPase activity is activated by dsRNA-binding but not dsDNA-binding. (Microbial infection) The NLRP1 inflammasome is activated by human herpes virus 8/HHV-8 protein ORF45, which interacts with the N-terminal part of NLRP1 and promotes its translocation into the nucleus, relieving autoinhibition and leading to activation. With respect to regulation, (Microbial infection) NLRP1 inflammasome is activated by cleavage by the 3C-like proteinase nsp5 from human coronavirus SARS-CoV-2. In terms of biological role, acts as the sensor component of the NLRP1 inflammasome, which mediates inflammasome activation in response to various pathogen-associated signals, leading to subsequent pyroptosis. Inflammasomes are supramolecular complexes that assemble in the cytosol in response to pathogens and other damage-associated signals and play critical roles in innate immunity and inflammation. Acts as a recognition receptor (PRR): recognizes specific pathogens and other damage-associated signals, such as cleavage by some human enteroviruses and rhinoviruses, double-stranded RNA, UV-B irradiation, or Val-boroPro inhibitor, and mediates the formation of the inflammasome polymeric complex composed of NLRP1, CASP1 and PYCARD/ASC. In response to pathogen-associated signals, the N-terminal part of NLRP1 is degraded by the proteasome, releasing the cleaved C-terminal part of the protein (NACHT, LRR and PYD domains-containing protein 1, C-terminus), which polymerizes and associates with PYCARD/ASC to initiate the formation of the inflammasome complex: the NLRP1 inflammasome recruits pro-caspase-1 (proCASP1) and promotes caspase-1 (CASP1) activation, which subsequently cleaves and activates inflammatory cytokines IL1B and IL18 and gasdermin-D (GSDMD), leading to pyroptosis. In the absence of GSDMD expression, the NLRP1 inflammasome is able to recruit and activate CASP8, leading to activation of gasdermin-E (GSDME). Activation of NLRP1 inflammasome is also required for HMGB1 secretion; the active cytokines and HMGB1 stimulate inflammatory responses. Binds ATP and shows ATPase activity. Plays an important role in antiviral immunity and inflammation in the human airway epithelium. Specifically recognizes a number of pathogen-associated signals: upon infection by human rhinoviruses 14 and 16 (HRV-14 and HRV-16), NLRP1 is cleaved and activated which triggers NLRP1-dependent inflammasome activation and IL18 secretion. Positive-strand RNA viruses, such as Semliki forest virus and long dsRNA activate the NLRP1 inflammasome, triggering IL1B release in a NLRP1-dependent fashion. Acts as a direct sensor for long dsRNA and thus RNA virus infection. May also be activated by muramyl dipeptide (MDP), a fragment of bacterial peptidoglycan, in a NOD2-dependent manner. The NLRP1 inflammasome is also activated in response to UV-B irradiation causing ribosome collisions: ribosome collisions cause phosphorylation and activation of NLRP1 in a MAP3K20-dependent manner, leading to pyroptosis. Constitutes the precursor of the NLRP1 inflammasome, which mediates autoproteolytic processing within the FIIND domain to generate the N-terminal and C-terminal parts, which are associated non-covalently in absence of pathogens and other damage-associated signals. Functionally, regulatory part that prevents formation of the NLRP1 inflammasome: in absence of pathogens and other damage-associated signals, interacts with the C-terminal part of NLRP1 (NACHT, LRR and PYD domains-containing protein 1, C-terminus), preventing activation of the NLRP1 inflammasome. In response to pathogen-associated signals, this part is ubiquitinated and degraded by the proteasome, releasing the cleaved C-terminal part of the protein, which polymerizes and forms the NLRP1 inflammasome. Its function is as follows. Constitutes the active part of the NLRP1 inflammasome. In absence of pathogens and other damage-associated signals, interacts with the N-terminal part of NLRP1 (NACHT, LRR and PYD domains-containing protein 1, N-terminus), preventing activation of the NLRP1 inflammasome. In response to pathogen-associated signals, the N-terminal part of NLRP1 is degraded by the proteasome, releasing this form, which polymerizes and associates with PYCARD/ASC to form of the NLRP1 inflammasome complex: the NLRP1 inflammasome complex then directly recruits pro-caspase-1 (proCASP1) and promotes caspase-1 (CASP1) activation, leading to gasdermin-D (GSDMD) cleavage and subsequent pyroptosis. In terms of biological role, it is unclear whether is involved in inflammasome formation. It is not cleaved within the FIIND domain, does not assemble into specks, nor promote IL1B release. However, in an vitro cell-free system, it has been shown to be activated by MDP. The sequence is that of NACHT, LRR and PYD domains-containing protein 1 from Homo sapiens (Human).